Here is a 210-residue protein sequence, read N- to C-terminus: Large ribosomal subunit protein uL15 (210 aa).

Disordered regions lie at residues 1-64 (MADD…AAPR) and 76-104 (AAGA…TKGT). Residues 9–54 (EAAAKPVAEKATATALAKKAPAKAAAADKAAPAAKGETVAAKPAKA) are compositionally biased toward low complexity. The span at 79–93 (AKKEKTRVGRGEGSK) shows a compositional bias: basic and acidic residues.

Belongs to the universal ribosomal protein uL15 family. As to quaternary structure, part of the 50S ribosomal subunit.

Its function is as follows. Binds to the 23S rRNA. The protein is Large ribosomal subunit protein uL15 of Leifsonia xyli subsp. xyli (strain CTCB07).